The chain runs to 621 residues: Chaperone protein HtpG (621 aa).

The tract at residues 1–328 is a; substrate-binding; the sequence is MIQEKKKFDA…SEDLPLNISR (328 aa). The segment at 329–544 is b; the sequence is ESLQHNSVLE…DAAMDIRMER (216 aa). The interval 475-494 is disordered; it reads SDIDVEQTTSQSEAKNTDSK. Residues 545–621 form a c region; that stretch reads FLIEQKQIAN…LNDIVQKAIL (77 aa).

This sequence belongs to the heat shock protein 90 family. Homodimer.

The protein resides in the cytoplasm. Molecular chaperone. Has ATPase activity. The sequence is that of Chaperone protein HtpG from Rickettsia rickettsii (strain Iowa).